A 597-amino-acid chain; its full sequence is DNA mismatch repair protein MutL (597 aa).

It belongs to the DNA mismatch repair MutL/HexB family.

This protein is involved in the repair of mismatches in DNA. It is required for dam-dependent methyl-directed DNA mismatch repair. May act as a 'molecular matchmaker', a protein that promotes the formation of a stable complex between two or more DNA-binding proteins in an ATP-dependent manner without itself being part of a final effector complex. This is DNA mismatch repair protein MutL from Rhodopseudomonas palustris (strain HaA2).